The sequence spans 1347 residues: Protocadherin-11 X-linked (1347 aa).

The first 23 residues, 1 to 23 (MDLLSGTYIFAVLLACVVFHSGA), serve as a signal peptide directing secretion. The Extracellular segment spans residues 24-812 (QEKNYTIREE…VSSPTSDYVK (789 aa)). Cadherin domains lie at 26–139 (KNYT…APLF), 140–249 (PATV…HPVF), 250–355 (KETE…VPSI), 362–466 (NPVN…APVF), 467–570 (TQSF…SPVF), 571–673 (THNE…KPVF), and 677–795 (PSNY…APVT). N-linked (GlcNAc...) asparagine glycosylation is found at N27, N48, and N54. N344 is a glycosylation site (N-linked (GlcNAc...) asparagine). N553 carries N-linked (GlcNAc...) asparagine glycosylation. N-linked (GlcNAc...) asparagine glycosylation is present at N773. Residues 813–833 (ILVAAVAGTITVVVVIFITAV) traverse the membrane as a helical segment. Residues 834–1347 (VRCRQAPHLK…DSPVMEEHPL (514 aa)) are Cytoplasmic-facing. Disordered stretches follow at residues 1057-1091 (LPEGSQESSSDGGLGDHDAGSLTSTSHGLPLGYPQ), 1097-1116 (RATPSNRTEGDGNSDPESTF), and 1325-1347 (TFTPRQQARPSRGDSPVMEEHPL).

The protein resides in the cell membrane. Potential calcium-dependent cell-adhesion protein. This Pan troglodytes (Chimpanzee) protein is Protocadherin-11 X-linked (PCDH11X).